The following is a 225-amino-acid chain: Thymidylate kinase (225 aa).

Position 10–17 (10–17) interacts with ATP; it reads GIDGAGKS.

This sequence belongs to the thymidylate kinase family.

It carries out the reaction dTMP + ATP = dTDP + ADP. In terms of biological role, phosphorylation of dTMP to form dTDP in both de novo and salvage pathways of dTTP synthesis. This is Thymidylate kinase from Polaromonas sp. (strain JS666 / ATCC BAA-500).